A 368-amino-acid chain; its full sequence is SH3 domain-containing protein 2 (368 aa).

2 coiled-coil regions span residues 1–21 (MDAI…QQQA) and 146–210 (LEDA…LGKE). The 264-residue stretch at 1–264 (MDAIRKQASR…MVSERQRIEA (264 aa)) folds into the BAR domain. The segment at 258-281 (ERQRIEAPSTPSSADSMPPPPSYE) is disordered. Positions 299 to 358 (MGYFLGEVLFPYHGVTDVELSLSTGEYVVVRKVTGSGWAEGECKGKAGWFPYGYIERRER) constitute an SH3 domain.

Homodimer. Interacts with FREE1. Interacts (via SH3 domain) with ATG8E and ATG8F. Component of a phosphoinositide 3-kinase (PI3K) complex containing ATG6, SH3P2 and FREE1. Binds to SH3P3 and DRP1A. Forms a complex made of SH3P2 and DRP1A and triggers its accumulation at the cell plate. In terms of tissue distribution, highly expressed in seedlings. Detected in flowers, leaves and stems.

The protein localises to the cytoplasm. Its subcellular location is the cytoplasmic vesicle. The protein resides in the clathrin-coated vesicle. It localises to the cell membrane. It is found in the late endosome. The protein localises to the autophagosome membrane. Regulator for autophaosome formation and/or maturation. Binds phosphatidylinositol-phosphate; highest affinity for vesicles containing PtdIns(3,4,5)P(3), followed by those containing PtdIns(4,5)P(2) and PtdIns(3,4)P(2), with minimal binding to phosphatidylinositol monophosphates, including PtdIns(3)P. Together with DRP1A, converts the fused vesicles to tubular structures at the cell plate during cytokinesis. This is SH3 domain-containing protein 2 from Arabidopsis thaliana (Mouse-ear cress).